The chain runs to 97 residues: Small ribosomal subunit protein bS20 (97 aa).

The protein belongs to the bacterial ribosomal protein bS20 family.

In terms of biological role, binds directly to 16S ribosomal RNA. The sequence is that of Small ribosomal subunit protein bS20 from Gloeothece citriformis (strain PCC 7424) (Cyanothece sp. (strain PCC 7424)).